A 275-amino-acid polypeptide reads, in one-letter code: Trans-aconitate 2-methyltransferase (275 aa).

It belongs to the methyltransferase superfamily. Tam family.

It is found in the cytoplasm. The catalysed reaction is trans-aconitate + S-adenosyl-L-methionine = (E)-3-(methoxycarbonyl)pent-2-enedioate + S-adenosyl-L-homocysteine. In terms of biological role, catalyzes the S-adenosylmethionine monomethyl esterification of trans-aconitate. The polypeptide is Trans-aconitate 2-methyltransferase (Pseudomonas aeruginosa (strain ATCC 15692 / DSM 22644 / CIP 104116 / JCM 14847 / LMG 12228 / 1C / PRS 101 / PAO1)).